A 140-amino-acid chain; its full sequence is Protein NrdI (140 aa).

It belongs to the NrdI family.

Probably involved in ribonucleotide reductase function. This chain is Protein NrdI, found in Ruegeria sp. (strain TM1040) (Silicibacter sp.).